Consider the following 629-residue polypeptide: Replication protein A 70 kDa DNA-binding subunit D (629 aa).

The disordered stretch occupies residues 112-135 (LDSKSGEEEAREPKKQKLEHSPVS). The segment covering 115–131 (KSGEEEAREPKKQKLEH) has biased composition (basic and acidic residues). A DNA-binding region (OB) is located at residues 194 to 280 (WTIKVRVTNK…QNDYEMTLNE (87 aa)). A C4-type zinc finger spans residues 492 to 512 (CKTCNKKVTEALDSGYWCEGC).

This sequence belongs to the replication factor A protein 1 family. As to quaternary structure, heterotrimer of RPA1, RPA2 and RPA3 (canonical replication protein A complex).

It localises to the nucleus. Its function is as follows. Component of the replication protein A complex (RPA) required for DNA recombination, repair and replication. The activity of RPA is mediated by single-stranded DNA binding and protein interactions. Probably involved in repair of double-strand DNA breaks (DSBs) induced by genotoxic stresses. The chain is Replication protein A 70 kDa DNA-binding subunit D (RPA1D) from Arabidopsis thaliana (Mouse-ear cress).